A 200-amino-acid polypeptide reads, in one-letter code: Lipopolysaccharide core heptose(II)-phosphate phosphatase (200 aa).

The first 25 residues, 1 to 25 (MLAFCRSSLKSKKYFIILLALAAIA), serve as a signal peptide directing secretion.

This sequence belongs to the phosphoglycerate mutase family. Ais subfamily.

It is found in the periplasm. Its pathway is bacterial outer membrane biogenesis; lipopolysaccharide metabolism. In terms of biological role, catalyzes the dephosphorylation of heptose(II) of the outer membrane lipopolysaccharide core. The sequence is that of Lipopolysaccharide core heptose(II)-phosphate phosphatase from Escherichia coli O17:K52:H18 (strain UMN026 / ExPEC).